The chain runs to 713 residues: Serologically defined colon cancer antigen 8 (713 aa).

A phosphoserine mark is found at S4 and S28. The segment at 84–103 is disordered; the sequence is QADKESEVSPSRRRKMSPLR. Positions 129–175 form a coiled coil; it reads IHHLEAEVKFCKEELSGMKNKIQVVVLENEGLQQQLKSQRQEETLRE. Residues 194 to 215 are disordered; that stretch reads EDSGVGETSKRPFSHDNADFGK. The segment covering 201–212 has biased composition (basic and acidic residues); it reads TSKRPFSHDNAD. The interval 216 to 713 is sufficient for homodimerization; that stretch reads AASAGEQLEL…QLPSMPQSDC (498 aa). 2 coiled-coil regions span residues 223–273 and 348–707; these read LELE…LLAA and EEAN…QLPS. The tract at residues 533–713 is mediates interaction with OFD1; the sequence is HQLHLTRQEK…QLPSMPQSDC (181 aa).

Homodimer. Interacts with OFD1; the interaction is direct. Interacts with FAM161A. Interacts with RABEP2, ERC1 and CEP131. In terms of tissue distribution, expressed in thymus, prostate, testis, ovary, small intestine, colon, mucosa, colon and renal cancer tumors.

Its subcellular location is the cytoplasm. It is found in the cytoskeleton. The protein localises to the microtubule organizing center. It localises to the centrosome. The protein resides in the centriole. Its subcellular location is the cilium basal body. It is found in the cell junction. Functionally, plays a role in the establishment of cell polarity and epithelial lumen formation. Also plays an essential role in ciliogenesis and subsequent Hedgehog signaling pathway that requires the presence of intact primary cilia for pathway activation. Mechanistically, interacts with and mediates RABEP2 centrosomal localization which is critical for ciliogenesis. The polypeptide is Serologically defined colon cancer antigen 8 (SDCCAG8) (Homo sapiens (Human)).